The sequence spans 994 residues: Probable beta-galactosidase C (994 aa).

The first 19 residues, Met1–Ala19, serve as a signal peptide directing secretion. Tyr78 serves as a coordination point for substrate. Asn88 is a glycosylation site (N-linked (GlcNAc...) asparagine). The substrate site is built by Asn123, Ala124, Glu125, and Asn183. Glu184 serves as the catalytic Proton donor. Tyr247 contributes to the substrate binding site. Residues Cys253 and Cys301 are joined by a disulfide bond. Residue Asn272 is glycosylated (N-linked (GlcNAc...) asparagine). Glu283 serves as the catalytic Nucleophile. Tyr350 contacts substrate. N-linked (GlcNAc...) asparagine glycosylation is found at Asn388, Asn407, Asn433, Asn500, Asn514, Asn521, Asn584, Asn600, Asn674, Asn712, Asn717, Asn757, Asn861, and Asn969.

It belongs to the glycosyl hydrolase 35 family.

The protein resides in the secreted. It carries out the reaction Hydrolysis of terminal non-reducing beta-D-galactose residues in beta-D-galactosides.. Functionally, cleaves beta-linked terminal galactosyl residues from gangliosides, glycoproteins, and glycosaminoglycans. This is Probable beta-galactosidase C (lacC) from Aspergillus niger (strain ATCC MYA-4892 / CBS 513.88 / FGSC A1513).